Reading from the N-terminus, the 1368-residue chain is DNA-directed RNA polymerase subunit beta (1368 aa).

The protein belongs to the RNA polymerase beta chain family. In terms of assembly, the RNAP catalytic core consists of 2 alpha, 1 beta, 1 beta' and 1 omega subunit. When a sigma factor is associated with the core the holoenzyme is formed, which can initiate transcription.

The enzyme catalyses RNA(n) + a ribonucleoside 5'-triphosphate = RNA(n+1) + diphosphate. Its function is as follows. DNA-dependent RNA polymerase catalyzes the transcription of DNA into RNA using the four ribonucleoside triphosphates as substrates. This chain is DNA-directed RNA polymerase subunit beta, found in Burkholderia pseudomallei (strain K96243).